Consider the following 211-residue polypeptide: C-type lectin domain-containing protein 158 (211 aa).

Residues Met-1–Ala-16 form the signal peptide.

This chain is C-type lectin domain-containing protein 158 (clec-158), found in Caenorhabditis elegans.